A 480-amino-acid polypeptide reads, in one-letter code: GTPase Obg (480 aa).

The 158-residue stretch at 2–159 (TRFIDRVVIH…RDLTLELKTV (158 aa)) folds into the Obg domain. The region spanning 160-341 (ADVGLVGFPS…LTFALWDMVA (182 aa)) is the OBG-type G domain. Residues 166-173 (GFPSAGKS), 191-195 (FTTLA), 212-215 (DVPG), 292-295 (NKID), and 322-324 (STV) each bind GTP. The Mg(2+) site is built by Ser-173 and Thr-193. One can recognise an OCT domain in the interval 359 to 437 (PIPVDETAFS…IGDMTFDWEP (79 aa)). Residues 441 to 480 (AGVDVPLTGRGTDVRLEQTDRVGADERKAARKARRQSGDE) are disordered. Residues 452–468 (TDVRLEQTDRVGADERK) show a composition bias toward basic and acidic residues. The segment covering 469-480 (AARKARRQSGDE) has biased composition (basic residues).

This sequence belongs to the TRAFAC class OBG-HflX-like GTPase superfamily. OBG GTPase family. Monomer. Mg(2+) serves as cofactor.

It is found in the cytoplasm. Its function is as follows. An essential GTPase which binds GTP, GDP and possibly (p)ppGpp with moderate affinity, with high nucleotide exchange rates and a fairly low GTP hydrolysis rate. Plays a role in control of the cell cycle, stress response, ribosome biogenesis and in those bacteria that undergo differentiation, in morphogenesis control. The chain is GTPase Obg from Mycolicibacterium vanbaalenii (strain DSM 7251 / JCM 13017 / BCRC 16820 / KCTC 9966 / NRRL B-24157 / PYR-1) (Mycobacterium vanbaalenii).